The chain runs to 415 residues: Leucine-rich repeat-containing protein 34 (415 aa).

LRR repeat units follow at residues 246–272 and 274–296; these read TLRY…LKSN and TLEV…LSET.

In terms of assembly, interacts with NPM1 and NCL.

Its subcellular location is the nucleus. It is found in the nucleolus. The protein resides in the cytoplasm. In terms of biological role, highly expressed in stem cells where it may be involved in regulation of pluripotency. In embryonic stem cells (ESCs), important for normal expression of the pluripotency regulators POU5F1/OCT4 and KLF4. Also important for expression of the ectodermal marker gene NES and the endodermal marker gene GATA4. Promotes stem cell proliferation in vitro. The protein is Leucine-rich repeat-containing protein 34 (Lrrc34) of Rattus norvegicus (Rat).